The following is a 634-amino-acid chain: GTP-binding protein 4 (634 aa).

At Ala2 the chain carries N-acetylalanine. The residue at position 103 (Lys103) is an N6-acetyllysine; alternate. Residue Lys103 forms a Glycyl lysine isopeptide (Lys-Gly) (interchain with G-Cter in SUMO2); alternate linkage. Ser122 carries the post-translational modification Phosphoserine. Residues 169–340 (RTLLLCGYPN…VKTEACDRLL (172 aa)) form the OBG-type G domain. GTP-binding positions include 175–182 (GYPNVGKS), 221–225 (DTPGI), and 289–292 (NKCD). Residue Lys332 forms a Glycyl lysine isopeptide (Lys-Gly) (interchain with G-Cter in SUMO2) linkage. Phosphoserine occurs at positions 468, 470, and 472. Residues 495-517 (ILESKEKNTQGPRMPRTAKKVQR) form a disordered region. An N6-acetyllysine modification is found at Lys522. Residues 529–634 (VDMDDKDDAH…KRKAGKKDRR (106 aa)) are disordered. Lys534 is covalently cross-linked (Glycyl lysine isopeptide (Lys-Gly) (interchain with G-Cter in SUMO2)). Basic residues predominate over residues 544–554 (RRSRSITRKRK). A Phosphoserine modification is found at Ser558. The span at 560-572 (PPSSVARSGSCSR) shows a compositional bias: polar residues. Residues 573–585 (TPRDVSGLRDVKM) are compositionally biased toward basic and acidic residues. Over residues 586-604 (VKKAKTMMKNAQKKMNRLG) the composition is skewed to basic residues. The span at 605 to 618 (KKGEADRHVFDMKP) shows a compositional bias: basic and acidic residues. Over residues 619-634 (KHLLSGKRKAGKKDRR) the composition is skewed to basic residues.

The protein belongs to the TRAFAC class OBG-HflX-like GTPase superfamily. OBG GTPase family. NOG subfamily. In terms of assembly, associates with pre-60S ribosomal particles. Interacts with MINAS-60 (product of an alternative open reading frame of RBM10).

The protein resides in the nucleus. It is found in the nucleolus. In terms of biological role, involved in the biogenesis of the 60S ribosomal subunit. Acts as a TP53 repressor, preventing TP53 stabilization and cell cycle arrest. The protein is GTP-binding protein 4 of Homo sapiens (Human).